The sequence spans 418 residues: UDP-N-acetylglucosamine 1-carboxyvinyltransferase (418 aa).

22 to 23 (KN) lines the phosphoenolpyruvate pocket. Residue Arg91 coordinates UDP-N-acetyl-alpha-D-glucosamine. Cys115 serves as the catalytic Proton donor. Residue Cys115 is modified to 2-(S-cysteinyl)pyruvic acid O-phosphothioketal. UDP-N-acetyl-alpha-D-glucosamine is bound by residues Asp305 and Ile327.

This sequence belongs to the EPSP synthase family. MurA subfamily.

The protein resides in the cytoplasm. The enzyme catalyses phosphoenolpyruvate + UDP-N-acetyl-alpha-D-glucosamine = UDP-N-acetyl-3-O-(1-carboxyvinyl)-alpha-D-glucosamine + phosphate. It functions in the pathway cell wall biogenesis; peptidoglycan biosynthesis. Functionally, cell wall formation. Adds enolpyruvyl to UDP-N-acetylglucosamine. This is UDP-N-acetylglucosamine 1-carboxyvinyltransferase from Aeromonas hydrophila subsp. hydrophila (strain ATCC 7966 / DSM 30187 / BCRC 13018 / CCUG 14551 / JCM 1027 / KCTC 2358 / NCIMB 9240 / NCTC 8049).